A 495-amino-acid polypeptide reads, in one-letter code: Taxoid 2-alpha-hydroxylase (495 aa).

Residues 17-37 form a helical membrane-spanning segment; it reads LQSSAILLTVVSGIIVIVILL. Residue cysteine 441 coordinates heme.

This sequence belongs to the cytochrome P450 family.

It is found in the microsome membrane. The catalysed reaction is taxusin + reduced [NADPH--hemoprotein reductase] + O2 = 2alpha-hydroxytaxusin + oxidized [NADPH--hemoprotein reductase] + H2O + H(+). The enzyme catalyses 7beta-hydroxytaxusin + reduced [NADPH--hemoprotein reductase] + O2 = 2alpha,7beta-dihydroxytaxusin + oxidized [NADPH--hemoprotein reductase] + H2O + H(+). Its pathway is alkaloid biosynthesis; taxol biosynthesis. In terms of biological role, catalyzes the conversion of taxusin to 2-alpha-hydroxytaxusin in taxol biosynthesis. Catalyzes the conversion of 7-beta-hydroxytaxusin to 2-alpha-7-beta-hydroxytaxusin in taxol biosynthesis. This Taxus canadensis (Canadian yew) protein is Taxoid 2-alpha-hydroxylase.